Consider the following 551-residue polypeptide: Glucan 1,4-alpha-maltotetraohydrolase (551 aa).

The first 21 residues, 1–21 (MSHILRAAVLAAVLLPFPALA), serve as a signal peptide directing secretion. Positions 22, 23, 34, 37, and 38 each coordinate Ca(2+). 99-100 (YF) contacts substrate. Asn-137 lines the Ca(2+) pocket. His-138 is a binding site for substrate. Cys-161 and Cys-171 form a disulfide bridge. The Ca(2+) site is built by Asp-172 and Asp-175. 177–181 (FIGGE) is a binding site for substrate. A Ca(2+)-binding site is contributed by Asp-183. Residue Arg-212 coordinates substrate. Asp-214 acts as the Nucleophile in catalysis. Gly-218 contacts Ca(2+). A disulfide bridge connects residues Cys-237 and Cys-272. Residue Glu-240 is the Proton donor of the active site. 2 residues coordinate substrate: His-314 and Gln-326. The CBM20 domain maps to 449 to 551 (GGEGGLVNVN…AAGASTSGSF (103 aa)).

Belongs to the glycosyl hydrolase 13 family. As to quaternary structure, monomer. Requires Ca(2+) as cofactor.

Its subcellular location is the secreted. It catalyses the reaction Hydrolysis of (1-&gt;4)-alpha-D-glucosidic linkages in amylaceous polysaccharides, to remove successive maltotetraose residues from the non-reducing chain ends.. Its pathway is glycan degradation; starch degradation. The protein is Glucan 1,4-alpha-maltotetraohydrolase (mta) of Roseateles saccharophilus (Pseudomonas saccharophila).